We begin with the raw amino-acid sequence, 556 residues long: MKTDIQIAQEAQMKHIKDVAELIDIHEDDLELYGKYKAKVSLDVLDQLKDKPDGKLVLVTAINPTPAGEGKTTTNIGLSMGLNKLGKKTSTALREPSLGPSFGVKGGAAGGGYAQVVPMADINLHFTGDFHAITSAHSLLAALVDNHLHHGNALRIDTNRIVWKRVVDMNDRALRKIVVGLGGKAQGITREDGFDITVASEIMAILCLANDREDLKERLGNMVVAYNVDGDAVRAKDLEAQGALTLILKDAINPNIVQTLENTPAFIHGGPFANIAHGCNSVLATKLALKTGDYAVTEAGFGADLGAEKFFDIKCRYAGLNPDVAVIVATVRALKMHGGVAKEDLGTENLDALAKGMTNLERHIENVAKFGVPSVVAINAFPTDTEAEKQLVFDKCKEMGVDVAISDVFAKGGDGGVELAQKVIDVCENKKSDFKVLYDVEESIPEKITKIAKEIYRADKVNFSKAAKKQIAELEKLGLDKLPICMAKTQYSFSDDPALLGAPEGFELTIRDLELAAGAGFIVALTGDIMRMPGLPKVPAANRMDVLPNGEIIGLF.

Residue 65-72 participates in ATP binding; that stretch reads TPAGEGKT.

Belongs to the formate--tetrahydrofolate ligase family.

The enzyme catalyses (6S)-5,6,7,8-tetrahydrofolate + formate + ATP = (6R)-10-formyltetrahydrofolate + ADP + phosphate. Its pathway is one-carbon metabolism; tetrahydrofolate interconversion. The protein is Formate--tetrahydrofolate ligase of Clostridium acidurici (Gottschalkia acidurici).